A 197-amino-acid chain; its full sequence is Protein GrpE (197 aa).

The segment at 1–40 (MSSKEQKTPEGQAPEEIIMDRHEEIEAVEPEASAEQVDPR) is disordered.

Belongs to the GrpE family. In terms of assembly, homodimer.

The protein resides in the cytoplasm. Functionally, participates actively in the response to hyperosmotic and heat shock by preventing the aggregation of stress-denatured proteins, in association with DnaK and GrpE. It is the nucleotide exchange factor for DnaK and may function as a thermosensor. Unfolded proteins bind initially to DnaJ; upon interaction with the DnaJ-bound protein, DnaK hydrolyzes its bound ATP, resulting in the formation of a stable complex. GrpE releases ADP from DnaK; ATP binding to DnaK triggers the release of the substrate protein, thus completing the reaction cycle. Several rounds of ATP-dependent interactions between DnaJ, DnaK and GrpE are required for fully efficient folding. This Shigella flexneri serotype 5b (strain 8401) protein is Protein GrpE.